The chain runs to 129 residues: Small ribosomal subunit protein uS9 (129 aa).

Residues Leu97 to Arg129 form a disordered region. Positions Lys110–Arg129 are enriched in basic residues.

The protein belongs to the universal ribosomal protein uS9 family.

This chain is Small ribosomal subunit protein uS9, found in Chlamydia trachomatis serovar A (strain ATCC VR-571B / DSM 19440 / HAR-13).